The primary structure comprises 137 residues: MIKTVIDNLCYNFGENMKNDDAIKVLSNELLKGAKMLSTHCSKCGCPLFEKDGKIYCPICEKLKNKETIEKGENEKEIKNEIERKKSEINEILDLNKVVMDKINYLVMKLKEEDEVSRIREIAEAIYVLIKLKKKIE.

The protein belongs to the UPF0148 family.

This is UPF0148 protein MJ0890 from Methanocaldococcus jannaschii (strain ATCC 43067 / DSM 2661 / JAL-1 / JCM 10045 / NBRC 100440) (Methanococcus jannaschii).